The chain runs to 448 residues: 26S proteasome regulatory subunit 4 homolog (448 aa).

Positions 1-10 are enriched in polar residues; it reads MGQAQSGNFS. Residues 1-58 form a disordered region; sequence MGQAQSGNFSNFGDGANGDNKKDQKKDKPKYEPPVPTRTGRRKKKAQSGPDASAKLPT. The span at 19 to 31 shows a compositional bias: basic and acidic residues; it reads DNKKDQKKDKPKY. Residue 232–239 participates in ATP binding; the sequence is GAPGTGKT.

Belongs to the AAA ATPase family.

Its subcellular location is the cytoplasm. It is found in the nucleus. The 26S proteasome is involved in the ATP-dependent degradation of ubiquitinated proteins. The regulatory (or ATPase) complex confers ATP dependency and substrate specificity to the 26S complex. In Schizosaccharomyces pombe (strain 972 / ATCC 24843) (Fission yeast), this protein is 26S proteasome regulatory subunit 4 homolog (mts2).